Reading from the N-terminus, the 506-residue chain is Probable E3 ubiquitin-protein ligase ARI14 (506 aa).

Positions 79-308 (PDSSSEISLE…VDSGFCIKTE (230 aa)) are TRIAD supradomain. The segment at 83–140 (SEISLETDVYEFDGDNDLISMPFCSHKFDSKYWREYLEKNFYYVEKIQTTISCPDQDC) adopts an RING-type 1 zinc-finger fold. Zn(2+)-binding residues include Cys-106, His-108, Cys-135, Cys-140, Cys-180, Cys-185, Cys-207, Cys-209, Cys-214, Cys-217, His-222, Cys-227, Cys-258, Cys-261, Cys-277, Cys-279, Cys-284, Cys-287, His-294, and Cys-304. The IBR-type zinc-finger motif lies at 158–227 (EMYERYIWRS…RLESHRPVSC (70 aa)). The RING-type 2; atypical zinc finger occupies 258–287 (CPHCLCSLESDTKMPQFLTCVCRLRFCSRC). The segment at 462–492 (GTGPFWYCDRCTYANTWEDNECEMCYDDSAS) adopts a RanBP2-type zinc-finger fold.

It belongs to the RBR family. Ariadne subfamily. Zn(2+) serves as cofactor. In terms of tissue distribution, mostly expressed in closed flowers and, to a lower extent, in pollen.

It carries out the reaction [E2 ubiquitin-conjugating enzyme]-S-ubiquitinyl-L-cysteine + [acceptor protein]-L-lysine = [E2 ubiquitin-conjugating enzyme]-L-cysteine + [acceptor protein]-N(6)-ubiquitinyl-L-lysine.. It functions in the pathway protein modification; protein ubiquitination. Its function is as follows. Might act as an E3 ubiquitin-protein ligase, or as part of E3 complex, which accepts ubiquitin from specific E2 ubiquitin-conjugating enzymes and then transfers it to substrates. Negatively regulates male gametophyte formation and double fertilization. This Arabidopsis thaliana (Mouse-ear cress) protein is Probable E3 ubiquitin-protein ligase ARI14.